A 257-amino-acid polypeptide reads, in one-letter code: MRKRERENPCSICGHYHKYEEGEVCGVCGHCMPVSSDTVAPQQVHVSAFPSEILPEFLYLGSYDNASRSELLKTQGISRVLNTVPMCQNLYRNSFTYHGLDNEKVLQFDDAIKFLDQCEKDKARVLVHCMSGKSRSPAVVVAYLMKRKGWRLAESHQWVKQRRPSTDISPEFYQQLQEFEQGIFGSEMMSAMNINDAPTFGFGFPKIDNQAQAPVFNNAPTSSIFSSPASSIPPQEFTFGATPPKPTTGGDIAMDGS.

The 137-residue stretch at 49-185 (FPSEILPEFL…LQEFEQGIFG (137 aa)) folds into the Tyrosine-protein phosphatase domain. The Phosphocysteine intermediate role is filled by Cys129. Positions 235–257 (QEFTFGATPPKPTTGGDIAMDGS) are disordered.

Belongs to the protein-tyrosine phosphatase family. In terms of assembly, interacts with SKP1A/ASK1 and with MPK12. In terms of tissue distribution, expressed in root tips and vasculature, cotyledons, stems, leaves vasculature and hydathodes, flowers, siliques, and seeds.

The protein resides in the nucleus. It catalyses the reaction O-phospho-L-tyrosyl-[protein] + H2O = L-tyrosyl-[protein] + phosphate. Its function is as follows. Required for the transduction of auxin and abscisic acid (ABA) signaling pathways. Dephosphorylates and inactivates the MAP kinase MPK12. The polypeptide is Protein-tyrosine-phosphatase IBR5 (IBR5) (Arabidopsis thaliana (Mouse-ear cress)).